Consider the following 268-residue polypeptide: Tryptophan synthase alpha chain (268 aa).

Residues Glu-49 and Asp-60 each act as proton acceptor in the active site.

It belongs to the TrpA family. In terms of assembly, tetramer of two alpha and two beta chains.

It carries out the reaction (1S,2R)-1-C-(indol-3-yl)glycerol 3-phosphate + L-serine = D-glyceraldehyde 3-phosphate + L-tryptophan + H2O. Its pathway is amino-acid biosynthesis; L-tryptophan biosynthesis; L-tryptophan from chorismate: step 5/5. Its function is as follows. The alpha subunit is responsible for the aldol cleavage of indoleglycerol phosphate to indole and glyceraldehyde 3-phosphate. The sequence is that of Tryptophan synthase alpha chain from Mannheimia succiniciproducens (strain KCTC 0769BP / MBEL55E).